The primary structure comprises 70 residues: U-actitoxin-Avd11a (70 aa).

In terms of domain architecture, ShKT spans 36-70 (CNDYKSSSYCRSVGSRNECGIHKYRMYCRKTCGSC). Intrachain disulfides connect Cys36–Cys70, Cys45–Cys63, and Cys54–Cys67. The segment at 58-59 (KY) is crucial for binding to potassium channels.

It belongs to the sea anemone type 1 potassium channel toxin family. Type 1b subfamily.

The protein resides in the secreted. The protein localises to the nematocyst. Its function is as follows. Inhibits voltage-gated potassium channels (Kv1/KCNA). The polypeptide is U-actitoxin-Avd11a (Anemonia viridis (Snakelocks anemone)).